A 318-amino-acid polypeptide reads, in one-letter code: tRNA dimethylallyltransferase (318 aa).

28 to 35 (GPTGAGKS) provides a ligand contact to ATP. 30 to 35 (TGAGKS) is a binding site for substrate. The segment at 53–56 (DSMQ) is interaction with substrate tRNA.

Belongs to the IPP transferase family. Monomer. It depends on Mg(2+) as a cofactor.

The enzyme catalyses adenosine(37) in tRNA + dimethylallyl diphosphate = N(6)-dimethylallyladenosine(37) in tRNA + diphosphate. Catalyzes the transfer of a dimethylallyl group onto the adenine at position 37 in tRNAs that read codons beginning with uridine, leading to the formation of N6-(dimethylallyl)adenosine (i(6)A). The protein is tRNA dimethylallyltransferase of Parafrankia sp. (strain EAN1pec).